The primary structure comprises 321 residues: Gap junction delta-2 protein (321 aa).

Topologically, residues 1 to 19 (MGEWTILERLLEAAVQQHS) are cytoplasmic. The chain crosses the membrane as a helical span at residues 20–42 (TMIGRILLTVVVIFRILIVAIVG). Topologically, residues 43 to 75 (ETVYDDEQTMFVCNTLQPGCNQACYDRAFPISH) are extracellular. A helical transmembrane segment spans residues 76–98 (IRYWVFQIIMVCTPSLCFITYSV). At 99 to 197 (HQSAKQRERR…KLRRQEGISR (99 aa)) the chain is on the cytoplasmic side. The disordered stretch occupies residues 120–141 (PAESIGGPGGTGGGGSGGSKRE). The segment covering 125–137 (GGPGGTGGGGSGG) has biased composition (gly residues). Residues 198-220 (FYIIQVVFRNALEIGFLVGQYFL) traverse the membrane as a helical segment. Topologically, residues 221-252 (YGFSVPGLYECNRYPCIKEVECYVSRPTEKTV) are extracellular. A helical transmembrane segment spans residues 253 to 275 (FLVFMFAVSGICVVLNLAELNHL). Residues 276 to 321 (GWRKIKLAVRGAQAKRKSVYEIRNKDLPRVSVPNFGRTQSSDSAYV) are Cytoplasmic-facing.

It belongs to the connexin family. Delta-type subfamily. In terms of assembly, a connexon is composed of a hexamer of connexins. As to expression, highly expressed in neurons.

It localises to the cell membrane. The protein localises to the cell junction. The protein resides in the gap junction. Functionally, one gap junction consists of a cluster of closely packed pairs of transmembrane channels, the connexons, through which materials of low MW diffuse from one cell to a neighboring cell. This chain is Gap junction delta-2 protein (Gjd2), found in Rattus norvegicus (Rat).